The sequence spans 171 residues: Transcription factor E (171 aa).

One can recognise an HTH TFE/IIEalpha-type domain in the interval 1 to 81 (MLNLAKELVG…YWKVNVNQIN (81 aa)).

Belongs to the TFE family. Monomer. Interaction with RNA polymerase subunits RpoF and RpoE is necessary for Tfe stimulatory transcription activity. Able to interact with Tbp and RNA polymerase in the absence of DNA promoter. Interacts both with the preinitiation and elongation complexes.

Transcription factor that plays a role in the activation of archaeal genes transcribed by RNA polymerase. Facilitates transcription initiation by enhancing TATA-box recognition by TATA-box-binding protein (Tbp), and transcription factor B (Tfb) and RNA polymerase recruitment. Not absolutely required for transcription in vitro, but particularly important in cases where Tbp or Tfb function is not optimal. It dynamically alters the nucleic acid-binding properties of RNA polymerases by stabilizing the initiation complex and destabilizing elongation complexes. Seems to translocate with the RNA polymerase following initiation and acts by binding to the non template strand of the transcription bubble in elongation complexes. The sequence is that of Transcription factor E from Sulfolobus acidocaldarius (strain ATCC 33909 / DSM 639 / JCM 8929 / NBRC 15157 / NCIMB 11770).